A 380-amino-acid chain; its full sequence is L-lactate dehydrogenase (380 aa).

Residues Met1–Arg380 form the FMN hydroxy acid dehydrogenase domain. A substrate-binding site is contributed by Tyr24. 2 residues coordinate FMN: Ser106 and Gln127. Residue Tyr129 coordinates substrate. Thr155 contributes to the FMN binding site. Arg164 is a binding site for substrate. Position 251 (Lys251) interacts with FMN. The Proton acceptor role is filled by His275. Arg278 provides a ligand contact to substrate. Asp306–Arg330 is a binding site for FMN.

Belongs to the FMN-dependent alpha-hydroxy acid dehydrogenase family. FMN serves as cofactor.

It localises to the cell inner membrane. It catalyses the reaction (S)-lactate + A = pyruvate + AH2. Catalyzes the conversion of L-lactate to pyruvate. Is coupled to the respiratory chain. This is L-lactate dehydrogenase from Serratia proteamaculans (strain 568).